The sequence spans 130 residues: Lysozyme C, kidney isozyme (130 aa).

The C-type lysozyme domain maps to 1–130 (KVFERCELAR…LTSYIQGCGV (130 aa)). 4 disulfide bridges follow: Cys-6/Cys-128, Cys-30/Cys-116, Cys-65/Cys-81, and Cys-77/Cys-95. Active-site residues include Glu-35 and Asp-53.

This sequence belongs to the glycosyl hydrolase 22 family. In terms of assembly, monomer.

The protein localises to the secreted. The catalysed reaction is Hydrolysis of (1-&gt;4)-beta-linkages between N-acetylmuramic acid and N-acetyl-D-glucosamine residues in a peptidoglycan and between N-acetyl-D-glucosamine residues in chitodextrins.. In terms of biological role, lysozymes have primarily a bacteriolytic function; those in tissues and body fluids are associated with the monocyte-macrophage system and enhance the activity of immunoagents. The polypeptide is Lysozyme C, kidney isozyme (Ovis aries (Sheep)).